A 528-amino-acid polypeptide reads, in one-letter code: ATP synthase subunit alpha 1 (528 aa).

177–184 lines the ATP pocket; sequence GDRQTGKT.

This sequence belongs to the ATPase alpha/beta chains family. In terms of assembly, F-type ATPases have 2 components, CF(1) - the catalytic core - and CF(0) - the membrane proton channel. CF(1) has five subunits: alpha(3), beta(3), gamma(1), delta(1), epsilon(1). CF(0) has three main subunits: a(1), b(2) and c(9-12). The alpha and beta chains form an alternating ring which encloses part of the gamma chain. CF(1) is attached to CF(0) by a central stalk formed by the gamma and epsilon chains, while a peripheral stalk is formed by the delta and b chains.

Its subcellular location is the cell inner membrane. It catalyses the reaction ATP + H2O + 4 H(+)(in) = ADP + phosphate + 5 H(+)(out). Functionally, produces ATP from ADP in the presence of a proton gradient across the membrane. The alpha chain is a regulatory subunit. This chain is ATP synthase subunit alpha 1, found in Pseudoalteromonas atlantica (strain T6c / ATCC BAA-1087).